Here is a 173-residue protein sequence, read N- to C-terminus: Photosystem I assembly protein Ycf3 (173 aa).

TPR repeat units lie at residues 36 to 69, 73 to 106, and 121 to 154; these read AFAY…EQDD, SYIL…NPRL, and GEQS…APNN.

The protein belongs to the Ycf3 family.

The protein resides in the cellular thylakoid membrane. Functionally, essential for the assembly of the photosystem I (PSI) complex. May act as a chaperone-like factor to guide the assembly of the PSI subunits. The chain is Photosystem I assembly protein Ycf3 from Synechococcus sp. (strain JA-3-3Ab) (Cyanobacteria bacterium Yellowstone A-Prime).